A 328-amino-acid polypeptide reads, in one-letter code: tRNA uridine(34) hydroxylase (328 aa).

In terms of domain architecture, Rhodanese spans 130-224 (LDKDTVVLDT…YGKDPEVQGE (95 aa)). Residue cysteine 184 is the Cysteine persulfide intermediate of the active site.

Belongs to the TrhO family.

It carries out the reaction uridine(34) in tRNA + AH2 + O2 = 5-hydroxyuridine(34) in tRNA + A + H2O. Functionally, catalyzes oxygen-dependent 5-hydroxyuridine (ho5U) modification at position 34 in tRNAs. The protein is tRNA uridine(34) hydroxylase of Streptococcus pneumoniae (strain Hungary19A-6).